Here is a 151-residue protein sequence, read N- to C-terminus: Late embryogenesis abundant protein Lea14-A (151 aa).

This sequence belongs to the LEA type 2 family.

In Gossypium hirsutum (Upland cotton), this protein is Late embryogenesis abundant protein Lea14-A (LEA14-A).